The primary structure comprises 566 residues: Proline--tRNA ligase (566 aa).

Belongs to the class-II aminoacyl-tRNA synthetase family. ProS type 1 subfamily. In terms of assembly, homodimer.

The protein resides in the cytoplasm. It carries out the reaction tRNA(Pro) + L-proline + ATP = L-prolyl-tRNA(Pro) + AMP + diphosphate. Catalyzes the attachment of proline to tRNA(Pro) in a two-step reaction: proline is first activated by ATP to form Pro-AMP and then transferred to the acceptor end of tRNA(Pro). As ProRS can inadvertently accommodate and process non-cognate amino acids such as alanine and cysteine, to avoid such errors it has two additional distinct editing activities against alanine. One activity is designated as 'pretransfer' editing and involves the tRNA(Pro)-independent hydrolysis of activated Ala-AMP. The other activity is designated 'posttransfer' editing and involves deacylation of mischarged Ala-tRNA(Pro). The misacylated Cys-tRNA(Pro) is not edited by ProRS. The sequence is that of Proline--tRNA ligase from Campylobacter concisus (strain 13826).